Consider the following 317-residue polypeptide: Type II methyltransferase M.MgeORF184P (317 aa).

This sequence belongs to the N(4)/N(6)-methyltransferase family.

It catalyses the reaction a 2'-deoxyadenosine in DNA + S-adenosyl-L-methionine = an N(6)-methyl-2'-deoxyadenosine in DNA + S-adenosyl-L-homocysteine + H(+). Functionally, probably recognizes the double-stranded sequence 5'-CTAT-3' and methylates A-3 on only one strand; as the bacterial DNA is methylated on this sequence and this is the only type II methylase in the genome, it is probably responsible for all of the methylation on this site in the genome. The chain is Type II methyltransferase M.MgeORF184P from Mycoplasma genitalium (strain ATCC 33530 / DSM 19775 / NCTC 10195 / G37) (Mycoplasmoides genitalium).